The sequence spans 463 residues: Chaperone SurA (463 aa).

The signal sequence occupies residues 1–25; that stretch reads MTKPFSVLLASLLVITSTVSPLASA. 2 consecutive PpiC domains span residues 174-276 and 289-388; these read GSQY…KLVE and LTEY…QRVG. Disordered regions lie at residues 329–348 and 434–463; these read ATAK…GDLG and GDRA…QPTR. The span at 440-452 shows a compositional bias: low complexity; the sequence is DATAAPEPAAAPA. Over residues 453–463 the composition is skewed to pro residues; it reads APTPPPAQPTR.

Its subcellular location is the periplasm. The catalysed reaction is [protein]-peptidylproline (omega=180) = [protein]-peptidylproline (omega=0). Chaperone involved in the correct folding and assembly of outer membrane proteins. Recognizes specific patterns of aromatic residues and the orientation of their side chains, which are found more frequently in integral outer membrane proteins. May act in both early periplasmic and late outer membrane-associated steps of protein maturation. This is Chaperone SurA from Xanthomonas campestris pv. campestris (strain 8004).